Reading from the N-terminus, the 353-residue chain is Cytochrome bc1 complex Rieske iron-sulfur subunit (353 aa).

The disordered stretch occupies residues 1 to 51 (MSSQDIPEENLPAEQDRPHGAAARPADETNPFADPGLPPHEPRVQDVDERA). The segment covering 40 to 51 (HEPRVQDVDERA) has biased composition (basic and acidic residues). 3 helical membrane-spanning segments follow: residues 60–80 (ALLFTLSMLATIAFIAAFVAI), 99–119 (FALGMTLGVALFAIGAGAVHW), and 164–184 (LIRNTMLGALTLVPLSGVVLL). The 91-residue stretch at 246 to 336 (KAALMIIRLE…IGVNDEGYLE (91 aa)) folds into the Rieske domain. The [2Fe-2S] cluster site is built by cysteine 279, histidine 281, cysteine 298, and histidine 301. Cysteine 284 and cysteine 300 form a disulfide bridge.

Belongs to the Rieske iron-sulfur protein family. As to quaternary structure, the cytochrome bc1 complex is composed of a cytochrome b (QcrB), the Rieske iron-sulfur protein (QcrA) and a diheme cytochrome c (QcrC) subunit. It depends on [2Fe-2S] cluster as a cofactor.

It is found in the cell membrane. Functionally, iron-sulfur subunit of the cytochrome bc1 complex, an essential component of the respiratory electron transport chain required for ATP synthesis. The bc1 complex catalyzes the oxidation of menaquinol and the reduction of cytochrome c in the respiratory chain. The bc1 complex operates through a Q-cycle mechanism that couples electron transfer to generation of the proton gradient that drives ATP synthesis. The polypeptide is Cytochrome bc1 complex Rieske iron-sulfur subunit (qcrA) (Streptomyces coelicolor (strain ATCC BAA-471 / A3(2) / M145)).